We begin with the raw amino-acid sequence, 155 residues long: Small ribosomal subunit protein uS7c (155 aa).

It belongs to the universal ribosomal protein uS7 family. Part of the 30S ribosomal subunit.

The protein localises to the plastid. The protein resides in the chloroplast. In terms of biological role, one of the primary rRNA binding proteins, it binds directly to 16S rRNA where it nucleates assembly of the head domain of the 30S subunit. This chain is Small ribosomal subunit protein uS7c (rps7), found in Butomus umbellatus (Flowering rush).